A 95-amino-acid chain; its full sequence is Small ribosomal subunit protein bS6 (95 aa).

It belongs to the bacterial ribosomal protein bS6 family.

In terms of biological role, binds together with bS18 to 16S ribosomal RNA. This is Small ribosomal subunit protein bS6 from Corynebacterium glutamicum (strain ATCC 13032 / DSM 20300 / JCM 1318 / BCRC 11384 / CCUG 27702 / LMG 3730 / NBRC 12168 / NCIMB 10025 / NRRL B-2784 / 534).